A 392-amino-acid chain; its full sequence is Y' element ATP-dependent helicase YFL066C (392 aa).

Positions 1 to 175 (MADTPSVAVQ…LQRIGLTGLA (175 aa)) constitute a Helicase ATP-binding domain. 11 to 18 (APPGYGKT) contacts ATP. One can recognise a Helicase C-terminal domain in the interval 232-381 (KLLLALFEIE…EFYGLESKKG (150 aa)).

The protein belongs to the helicase family. Yeast subtelomeric Y' repeat subfamily.

Functionally, catalyzes DNA unwinding and is involved in telomerase-independent telomere maintenance. This is Y' element ATP-dependent helicase YFL066C from Saccharomyces cerevisiae (strain ATCC 204508 / S288c) (Baker's yeast).